The following is a 66-amino-acid chain: Large ribosomal subunit protein uL29 (66 aa).

This sequence belongs to the universal ribosomal protein uL29 family.

This chain is Large ribosomal subunit protein uL29, found in Brucella abortus (strain S19).